The sequence spans 341 residues: Glycerol-3-phosphate dehydrogenase [NAD(P)+] (341 aa).

The NADPH site is built by S11, W12, R32, and K106. K106, G137, and T139 together coordinate sn-glycerol 3-phosphate. An NADPH-binding site is contributed by A141. Positions 192, 245, 255, 256, and 257 each coordinate sn-glycerol 3-phosphate. Catalysis depends on K192, which acts as the Proton acceptor. R256 provides a ligand contact to NADPH. 2 residues coordinate NADPH: V280 and E282.

Belongs to the NAD-dependent glycerol-3-phosphate dehydrogenase family.

It localises to the cytoplasm. The catalysed reaction is sn-glycerol 3-phosphate + NAD(+) = dihydroxyacetone phosphate + NADH + H(+). It carries out the reaction sn-glycerol 3-phosphate + NADP(+) = dihydroxyacetone phosphate + NADPH + H(+). It functions in the pathway membrane lipid metabolism; glycerophospholipid metabolism. Its function is as follows. Catalyzes the reduction of the glycolytic intermediate dihydroxyacetone phosphate (DHAP) to sn-glycerol 3-phosphate (G3P), the key precursor for phospholipid synthesis. This chain is Glycerol-3-phosphate dehydrogenase [NAD(P)+], found in Exiguobacterium sp. (strain ATCC BAA-1283 / AT1b).